Consider the following 151-residue polypeptide: UPF0208 membrane protein plu3094 (151 aa).

2 helical membrane-spanning segments follow: residues 46–65 (FGIR…QIAL) and 69–91 (LGPA…WWLG).

It belongs to the UPF0208 family.

Its subcellular location is the cell inner membrane. The sequence is that of UPF0208 membrane protein plu3094 from Photorhabdus laumondii subsp. laumondii (strain DSM 15139 / CIP 105565 / TT01) (Photorhabdus luminescens subsp. laumondii).